Here is an 87-residue protein sequence, read N- to C-terminus: Small ribosomal subunit protein bS20 (87 aa).

Belongs to the bacterial ribosomal protein bS20 family.

Its function is as follows. Binds directly to 16S ribosomal RNA. This Rhizorhabdus wittichii (strain DSM 6014 / CCUG 31198 / JCM 15750 / NBRC 105917 / EY 4224 / RW1) (Sphingomonas wittichii) protein is Small ribosomal subunit protein bS20.